Reading from the N-terminus, the 1028-residue chain is Unconventional myosin-Ic-A (1028 aa).

Residue Met1 is modified to N-acetylmethionine. The region spanning Gly12 to Glu696 is the Myosin motor domain. Gly105–Thr112 contributes to the ATP binding site. Lys348 bears the N6-methyllysine mark. Residues Leu573–Asp595 are actin-binding. IQ domains are found at residues Lys699–Asn728 and Met722–Val751. Positions Lys850 to Arg1024 constitute a TH1 domain.

The protein belongs to the TRAFAC class myosin-kinesin ATPase superfamily. Myosin family. In terms of assembly, interacts (via its IQ motifs) with calmodulin.

The protein resides in the cytoplasm. Its subcellular location is the cell membrane. It is found in the cell projection. It localises to the stereocilium membrane. In terms of biological role, myosins are actin-based motor molecules with ATPase activity. Unconventional myosins serve in intracellular movements. Their highly divergent tails are presumed to bind to membranous compartments, which would be moved relative to actin filaments. Involved in egg activation by coupling dynamic actin to membrane. This is Unconventional myosin-Ic-A (myo1c-a) from Xenopus laevis (African clawed frog).